The chain runs to 467 residues: MALSRIYSSKLASANKNLLPVITTYVRNASDSTDLKAVLSEKIPKEQERVKNFRKQFGATKVGEVTVDMMYGGMRGIKGLVCETSVLDPDEGIRFRGLSIPECQKVLPKAPGGAEPLPEGLFWLLITGDVPTKAQVDALSREWANRAALPSHVVTMLNNMPTTLHPMSQLSCAVTALNHESKYAKAYSEGVHKSKYWEYVYEDSMDLIAKLPVVAATIYRNTYRDGKGIGAIDPKKDWSANFTKMLGYEDEQFTELMRLYLTIHSDHEGGNVSAHTVHLVGSALSDPYLSFAAGMNGLAGPLHGLANQEVLVWLQKLRKELGDNASEDKVKDFIWKTLKSGQVVPGYGHAVLRKTDPRYTCQREFALKHLPNDPLFQLVSNIYKVVPPILTELGKVKNPWPNVDAHSGVLLQYYGLKEMNYYTVLFGVSRALGVLASLVWDRALGLPIERPKSMSTDGLMKAVGAAK.

Active-site residues include histidine 303, histidine 349, and aspartate 404.

This sequence belongs to the citrate synthase family. In terms of assembly, homodimer.

Its subcellular location is the mitochondrion matrix. It carries out the reaction oxaloacetate + acetyl-CoA + H2O = citrate + CoA + H(+). The protein operates within carbohydrate metabolism; tricarboxylic acid cycle; isocitrate from oxaloacetate: step 1/2. This chain is Probable citrate synthase 2, mitochondrial, found in Aedes aegypti (Yellowfever mosquito).